The following is a 346-amino-acid chain: Flap endonuclease 1 (346 aa).

An N-domain region spans residues 1–102 (MGVTELGKLI…AEIEERRKVK (102 aa)). Positions 31, 84, 156, 158, 177, 179, and 239 each coordinate Mg(2+). Residues 120-261 (DVAKYMKRAV…KALKLVWEFG (142 aa)) form an I-domain region.

The protein belongs to the XPG/RAD2 endonuclease family. FEN1 subfamily. Interacts with PCNA. PCNA stimulates the nuclease activity without altering cleavage specificity. Mg(2+) is required as a cofactor.

Functionally, structure-specific nuclease with 5'-flap endonuclease and 5'-3' exonuclease activities involved in DNA replication and repair. During DNA replication, cleaves the 5'-overhanging flap structure that is generated by displacement synthesis when DNA polymerase encounters the 5'-end of a downstream Okazaki fragment. Binds the unpaired 3'-DNA end and kinks the DNA to facilitate 5' cleavage specificity. Cleaves one nucleotide into the double-stranded DNA from the junction in flap DNA, leaving a nick for ligation. Also involved in the base excision repair (BER) pathway. Acts as a genome stabilization factor that prevents flaps from equilibrating into structures that lead to duplications and deletions. Also possesses 5'-3' exonuclease activity on nicked or gapped double-stranded DNA. The sequence is that of Flap endonuclease 1 from Pyrobaculum islandicum (strain DSM 4184 / JCM 9189 / GEO3).